A 332-amino-acid chain; its full sequence is MQPETQSSALPAYRFSIAPMLDWTDRHCRYFLRLLSRQTLLYTEMVTTGAIIHGKGDYLAYSEEEHPVALQLGGSDPAQLAHCAKLAEARGYDEINLNVGCPSDRVQNGMFGACLMGNAQLVADCVKAMRDVVSIPVTVKTRIGIDDQDSYAFLCDFINTVSGQGECEMFIIHARKAWLSGLSPKENREIPPLDYPRVYQLKRDFPHLTMSINGGIKSLEEAKEHLRHMDGVMVGREAYQNPGILAAVDREIFGADTTDTDPVAVVRAMYPYIERELSQGAYLGHITRHMLGLFQGIPGARQWRRYLSENAHKAGADAAVLEQALKLIADKR.

FMN-binding positions include 19 to 21 (PML) and Gln-71. The active-site Proton donor is the Cys-101. FMN is bound by residues Lys-140, His-173, 213-215 (NGG), and 235-236 (GR).

The protein belongs to the Dus family. DusA subfamily. The cofactor is FMN.

The catalysed reaction is 5,6-dihydrouridine(20) in tRNA + NADP(+) = uridine(20) in tRNA + NADPH + H(+). The enzyme catalyses 5,6-dihydrouridine(20) in tRNA + NAD(+) = uridine(20) in tRNA + NADH + H(+). It catalyses the reaction 5,6-dihydrouridine(20a) in tRNA + NADP(+) = uridine(20a) in tRNA + NADPH + H(+). It carries out the reaction 5,6-dihydrouridine(20a) in tRNA + NAD(+) = uridine(20a) in tRNA + NADH + H(+). Catalyzes the synthesis of 5,6-dihydrouridine (D), a modified base found in the D-loop of most tRNAs, via the reduction of the C5-C6 double bond in target uridines. Specifically modifies U20 and U20a in tRNAs. The chain is tRNA-dihydrouridine(20/20a) synthase from Salmonella typhi.